The chain runs to 310 residues: ADP-L-glycero-D-manno-heptose-6-epimerase (310 aa).

NADP(+) contacts are provided by residues 10-11, 31-32, K38, K53, 75-79, and N92; these read FI, DN, and EGACS. The active-site Proton acceptor is Y140. K144 lines the NADP(+) pocket. N169 is a substrate binding site. The NADP(+) site is built by V170 and K178. K178 (proton acceptor) is an active-site residue. Residues S180, H187, 201–204, R209, and Y272 contribute to the substrate site; that span reads FEGS.

Belongs to the NAD(P)-dependent epimerase/dehydratase family. HldD subfamily. As to quaternary structure, homopentamer. Requires NADP(+) as cofactor.

The catalysed reaction is ADP-D-glycero-beta-D-manno-heptose = ADP-L-glycero-beta-D-manno-heptose. It participates in nucleotide-sugar biosynthesis; ADP-L-glycero-beta-D-manno-heptose biosynthesis; ADP-L-glycero-beta-D-manno-heptose from D-glycero-beta-D-manno-heptose 7-phosphate: step 4/4. In terms of biological role, catalyzes the interconversion between ADP-D-glycero-beta-D-manno-heptose and ADP-L-glycero-beta-D-manno-heptose via an epimerization at carbon 6 of the heptose. This chain is ADP-L-glycero-D-manno-heptose-6-epimerase, found in Klebsiella pneumoniae subsp. pneumoniae (strain ATCC 700721 / MGH 78578).